A 519-amino-acid polypeptide reads, in one-letter code: Histidine--tRNA ligase, cytoplasmic (519 aa).

Residues 135–137 (DLT), Arg-162, Gln-178, Asp-182, Arg-331, and 335–336 (YY) each bind L-histidine.

Belongs to the class-II aminoacyl-tRNA synthetase family. In terms of assembly, homodimer.

The protein localises to the cytoplasm. The catalysed reaction is tRNA(His) + L-histidine + ATP = L-histidyl-tRNA(His) + AMP + diphosphate + H(+). Catalyzes the ATP-dependent ligation of histidine to the 3'-end of its cognate tRNA, via the formation of an aminoacyl-adenylate intermediate (His-AMP). Plays a role in axon guidance. This chain is Histidine--tRNA ligase, cytoplasmic (hars1), found in Takifugu rubripes (Japanese pufferfish).